Consider the following 305-residue polypeptide: Tyrosine recombinase XerC (305 aa).

The region spanning 4–95 (TSIQALINKW…AVKNFYRFLE (92 aa)) is the Core-binding (CB) domain. The region spanning 116–298 (LLPKALSEDD…SIKHLEAVYT (183 aa)) is the Tyr recombinase domain. Catalysis depends on residues Arg-159, Lys-182, His-250, Arg-253, and His-276. Tyr-285 functions as the O-(3'-phospho-DNA)-tyrosine intermediate in the catalytic mechanism.

The protein belongs to the 'phage' integrase family. XerC subfamily. As to quaternary structure, forms a cyclic heterotetrameric complex composed of two molecules of XerC and two molecules of XerD.

It localises to the cytoplasm. Functionally, site-specific tyrosine recombinase, which acts by catalyzing the cutting and rejoining of the recombining DNA molecules. The XerC-XerD complex is essential to convert dimers of the bacterial chromosome into monomers to permit their segregation at cell division. It also contributes to the segregational stability of plasmids. The chain is Tyrosine recombinase XerC from Rickettsia africae (strain ESF-5).